The primary structure comprises 858 residues: Leucine--tRNA ligase (858 aa).

The 'HIGH' region motif lies at Pro42–His52. The 'KMSKS' region signature appears at Lys618 to Ser622. Lys621 serves as a coordination point for ATP.

Belongs to the class-I aminoacyl-tRNA synthetase family.

The protein resides in the cytoplasm. The enzyme catalyses tRNA(Leu) + L-leucine + ATP = L-leucyl-tRNA(Leu) + AMP + diphosphate. The polypeptide is Leucine--tRNA ligase (Vibrio cholerae serotype O1 (strain ATCC 39541 / Classical Ogawa 395 / O395)).